Here is a 285-residue protein sequence, read N- to C-terminus: Large ribosomal subunit protein uL1m (285 aa).

The N-terminal 19 residues, 1–19, are a transit peptide targeting the mitochondrion; that stretch reads MLSVVAIPKICVTGPARRC.

This sequence belongs to the universal ribosomal protein uL1 family. Component of the mitochondrial large ribosomal subunit (mt-LSU). Mature yeast 74S mitochondrial ribosomes consist of a small (37S) and a large (54S) subunit. The 37S small subunit contains a 15S ribosomal RNA (15S mt-rRNA) and 34 different proteins. The 54S large subunit contains a 21S rRNA (21S mt-rRNA) and 46 different proteins.

It localises to the mitochondrion. Component of the mitochondrial ribosome (mitoribosome), a dedicated translation machinery responsible for the synthesis of mitochondrial genome-encoded proteins, including at least some of the essential transmembrane subunits of the mitochondrial respiratory chain. The mitoribosomes are attached to the mitochondrial inner membrane and translation products are cotranslationally integrated into the membrane. The chain is Large ribosomal subunit protein uL1m (MRPL1) from Saccharomyces cerevisiae (strain ATCC 204508 / S288c) (Baker's yeast).